A 109-amino-acid chain; its full sequence is MSFAGVLADADVKAALAGCAAADSFNYKTFFKACGLAAKSHEEVKKAFFVIDQDQSGFIEEDELKLFLQTFGAGARELTAAETKAFLAAGDEDGDGMIGVDEFVTLVKA.

The residue at position 2 (serine 2) is an N-acetylserine. 2 consecutive EF-hand domains span residues 39 to 74 (KSHEEVKKAFFVIDQDQSGFIEEDELKLFLQTFGAG) and 78 to 109 (LTAAETKAFLAAGDEDGDGMIGVDEFVTLVKA). The Ca(2+) site is built by aspartate 52, aspartate 54, serine 56, phenylalanine 58, glutamate 60, glutamate 63, aspartate 91, aspartate 93, aspartate 95, methionine 97, and glutamate 102.

This sequence belongs to the parvalbumin family.

Functionally, in muscle, parvalbumin is thought to be involved in relaxation after contraction. It binds two calcium ions. This Gadus chalcogrammus (Alaska pollock) protein is Parvalbumin beta-1.